The chain runs to 125 residues: Oxytocin-neurophysin 1 (125 aa).

The N-terminal stretch at 1 to 19 (MAGSSLACCLLGLLALTSA) is a signal peptide. Cys-20 and Cys-25 are oxidised to a cystine. Gly-28 carries the post-translational modification Glycine amide. 7 disulfides stabilise this stretch: Cys-41–Cys-85, Cys-44–Cys-58, Cys-52–Cys-75, Cys-59–Cys-65, Cys-92–Cys-104, Cys-98–Cys-116, and Cys-105–Cys-110.

Belongs to the vasopressin/oxytocin family. As to quaternary structure, interacts with oxytocin receptor (Ki=1.5 nM). Interacts with vasopressin V1aR/AVPR1A (Ki=37 nM), V1bR/AVPR1B (Ki=222 nM), and V2R/AVPR2 receptors (Ki=823 nM).

The protein resides in the secreted. Its function is as follows. Neurophysin 1 specifically binds oxytocin. Oxytocin causes contraction of the smooth muscle of the uterus and of the mammary gland. Acts by binding to oxytocin receptor (OXTR). The chain is Oxytocin-neurophysin 1 (OXT) from Bos taurus (Bovine).